The chain runs to 165 residues: Destrin (165 aa).

Alanine 2 carries the post-translational modification N-acetylalanine. The residue at position 3 (serine 3) is a Phosphoserine. An ADF-H domain is found at 4 to 153 (GVQVADEVCR…NRACIAEKLG (150 aa)). Lysine 19 bears the N6-acetyllysine mark. Residues 30–34 (KKRKK) carry the Nuclear localization signal motif.

Belongs to the actin-binding proteins ADF family. In terms of processing, ISGylated.

Actin-depolymerizing protein. Severs actin filaments (F-actin) and binds to actin monomers (G-actin). Acts in a pH-independent manner. The protein is Destrin (DSTN) of Bos taurus (Bovine).